A 360-amino-acid polypeptide reads, in one-letter code: MLSTSRSRFIRNTNGSGEEVTTFFDYDYGAPCHKFDVKQIGAQLLPPLYSLVFIFGFVGNMLVVLILINCKKLKSLTDIYLLNLAISDLLFLITLPLWAHSAANEWVFGNAMCKLFTGLYHIGYLGGIFFIILLTIDRYLAIVHAVFALKARTVTFGVVTSVITWLVAVFASVPGIIFTKCQEEDSVYICGPYFPRGWNNFHTIMRNILGLVLPLLIMVICYSGILKTLLRCRNEKKRHRAVRLIFTIMIVYFLFWTPYNIVILLNTFQEFFGLSNCESTRQLDQATQVTETLGMTHCCINPIIYAFVGEKFRRYLSMFFRKYITKRFCKQCPVFYRETVDGVTSTNTPSTAEQEVSVGL.

The Extracellular segment spans residues 1 to 42 (MLSTSRSRFIRNTNGSGEEVTTFFDYDYGAPCHKFDVKQIGA). An N-linked (GlcNAc...) asparagine glycan is attached at Asn14. The residue at position 26 (Tyr26) is a Sulfotyrosine. The helical transmembrane segment at 43–70 (QLLPPLYSLVFIFGFVGNMLVVLILINC) threads the bilayer. At 71-80 (KKLKSLTDIY) the chain is on the cytoplasmic side. Residues 81–100 (LLNLAISDLLFLITLPLWAH) form a helical membrane-spanning segment. Residues 101–114 (SAANEWVFGNAMCK) are Extracellular-facing. Cys113 and Cys190 are joined by a disulfide. A helical transmembrane segment spans residues 115 to 136 (LFTGLYHIGYLGGIFFIILLTI). Over 137–153 (DRYLAIVHAVFALKART) the chain is Cytoplasmic. At Tyr139 the chain carries Phosphotyrosine; by JAK2. The chain crosses the membrane as a helical span at residues 154-178 (VTFGVVTSVITWLVAVFASVPGIIF). The Extracellular portion of the chain corresponds to 179 to 206 (TKCQEEDSVYICGPYFPRGWNNFHTIMR). The chain crosses the membrane as a helical span at residues 207–226 (NILGLVLPLLIMVICYSGIL). Over 227 to 243 (KTLLRCRNEKKRHRAVR) the chain is Cytoplasmic. Residues 244–268 (LIFTIMIVYFLFWTPYNIVILLNTF) form a helical membrane-spanning segment. At 269–285 (QEFFGLSNCESTRQLDQ) the chain is on the extracellular side. Residues 286–309 (ATQVTETLGMTHCCINPIIYAFVG) form a helical membrane-spanning segment. Over 310 to 360 (EKFRRYLSMFFRKYITKRFCKQCPVFYRETVDGVTSTNTPSTAEQEVSVGL) the chain is Cytoplasmic.

The protein belongs to the G-protein coupled receptor 1 family. In terms of assembly, interacts with ARRB1. Interacts (via extracellular N-terminal region) with beta-defensin DEFB106A/DEFB106B; this interaction may preferentially require specific tyrosine sulfation on CCR2. Interacts with NUP85; the interaction is required for CCR2 clusters formation on the cell membrane and CCR2 signaling. N-glycosylated. Post-translationally, sulfation increases the affinity for both monomeric and dimeric CCL2 with stronger binding to the monomeric form. Binding of sulfated CCR2 to CCL2 promotes conversion of CCL2 from dimer to monomer.

Its subcellular location is the cell membrane. Functionally, key functional receptor for CCL2 but can also bind CCL7 and CCL12. Its binding with CCL2 on monocytes and macrophages mediates chemotaxis and migration induction through the activation of the PI3K cascade, the small G protein Rac and lamellipodium protrusion. Also acts as a receptor for the beta-defensin DEFB106A/DEFB106B. Regulates the expression of T-cell inflammatory cytokines and T-cell differentiation, promoting the differentiation of T-cells into T-helper 17 cells (Th17) during inflammation. Facilitates the export of mature thymocytes by enhancing directional movement of thymocytes to sphingosine-1-phosphate stimulation and up-regulation of S1P1R expression; signals through the JAK-STAT pathway to regulate FOXO1 activity leading to an increased expression of S1P1R. Plays an important role in mediating peripheral nerve injury-induced neuropathic pain. Increases NMDA-mediated synaptic transmission in both dopamine D1 and D2 receptor-containing neurons, which may be caused by MAPK/ERK-dependent phosphorylation of GRIN2B/NMDAR2B. Mediates the recruitment of macrophages and monocytes to the injury site following brain injury. The chain is C-C chemokine receptor type 2 (CCR2) from Macaca mulatta (Rhesus macaque).